A 337-amino-acid chain; its full sequence is Cysteine synthase 3 (337 aa).

An N6-(pyridoxal phosphate)lysine modification is found at lysine 47. Residues asparagine 78, 182–186 (GSSGT), and serine 270 each bind pyridoxal 5'-phosphate.

It belongs to the cysteine synthase/cystathionine beta-synthase family. As to quaternary structure, homodimer. Pyridoxal 5'-phosphate serves as cofactor.

It carries out the reaction O-acetyl-L-serine + hydrogen sulfide = L-cysteine + acetate. Its pathway is amino-acid biosynthesis; L-cysteine biosynthesis; L-cysteine from L-serine: step 2/2. Primarily catalyzes the formation of cysteine and acetate from O-acetylserine and hydrogen sulfide. Can also catalyze the formation of cysteine and acetate from S-sulfocysteine and hydrogen sulfide and the formation of cyanoalanine and hydrogen sulfide from either S-sulfocysteine or O-acetylserine and hydrogen cyanide. The chain is Cysteine synthase 3 from Caenorhabditis elegans.